A 296-amino-acid polypeptide reads, in one-letter code: Malate--CoA ligase subunit alpha (296 aa).

Residues 17–20 (TGDK), Lys-43, and 96–98 (ITD) contribute to the CoA site. Catalysis depends on His-251, which acts as the Tele-phosphohistidine intermediate.

This sequence belongs to the succinate/malate CoA ligase alpha subunit family. Heterotetramer of two alpha and two beta subunits.

The catalysed reaction is (S)-malate + ATP + CoA = (S)-malyl-CoA + ADP + phosphate. The protein operates within one-carbon metabolism; formaldehyde assimilation via serine pathway. This chain is Malate--CoA ligase subunit alpha (mtkB), found in Methylorubrum extorquens (strain ATCC 14718 / DSM 1338 / JCM 2805 / NCIMB 9133 / AM1) (Methylobacterium extorquens).